The chain runs to 176 residues: Peptide deformylase (176 aa).

Positions 95 and 137 each coordinate Fe cation. Residue Glu138 is part of the active site. His141 contributes to the Fe cation binding site.

The protein belongs to the polypeptide deformylase family. It depends on Fe(2+) as a cofactor.

The catalysed reaction is N-terminal N-formyl-L-methionyl-[peptide] + H2O = N-terminal L-methionyl-[peptide] + formate. Removes the formyl group from the N-terminal Met of newly synthesized proteins. Requires at least a dipeptide for an efficient rate of reaction. N-terminal L-methionine is a prerequisite for activity but the enzyme has broad specificity at other positions. The sequence is that of Peptide deformylase from Hyphomonas neptunium (strain ATCC 15444).